We begin with the raw amino-acid sequence, 291 residues long: ATP synthase gamma chain (291 aa).

The protein belongs to the ATPase gamma chain family. F-type ATPases have 2 components, CF(1) - the catalytic core - and CF(0) - the membrane proton channel. CF(1) has five subunits: alpha(3), beta(3), gamma(1), delta(1), epsilon(1). CF(0) has three main subunits: a, b and c.

Its subcellular location is the cell inner membrane. Produces ATP from ADP in the presence of a proton gradient across the membrane. The gamma chain is believed to be important in regulating ATPase activity and the flow of protons through the CF(0) complex. The polypeptide is ATP synthase gamma chain (Neisseria meningitidis serogroup B (strain ATCC BAA-335 / MC58)).